The sequence spans 284 residues: Protein-S-isoprenylcysteine O-methyltransferase (284 aa).

Topologically, residues M1–L16 are cytoplasmic. The helical transmembrane segment at S17–L33 threads the bilayer. Over T34–R41 the chain is Lumenal. A helical membrane pass occupies residues T42–Y59. The Cytoplasmic portion of the chain corresponds to R60 to R69. A helical membrane pass occupies residues A70 to Q87. Topologically, residues S88 to H92 are lumenal. A helical membrane pass occupies residues F93–A112. Topologically, residues V113–E131 are cytoplasmic. The helical transmembrane segment at Y132–F149 threads the bilayer. The Lumenal segment spans residues W150–K154. A helical transmembrane segment spans residues Q155–R174. Residues K175 to S212 are Cytoplasmic-facing. S-adenosyl-L-methionine contacts are provided by residues Q190, H197–V200, Y205, and H210–Y213. Residues Y213–C228 traverse the membrane as a helical segment. N229 is a topological domain (lumenal). A helical membrane pass occupies residues P230–F244. Residues R245–L284 are Cytoplasmic-facing. R247 lines the substrate pocket. E251 contacts S-adenosyl-L-methionine.

Belongs to the class VI-like SAM-binding methyltransferase superfamily. Isoprenylcysteine carboxyl methyltransferase family. As to expression, ubiquitously expressed. Expressed at higher levels in the cerebellum and putamen than in other brain regions. Abundant expression seen in the Purkinje cells and pontine neurons.

It localises to the endoplasmic reticulum membrane. The enzyme catalyses [protein]-C-terminal S-[(2E,6E)-farnesyl]-L-cysteine + S-adenosyl-L-methionine = [protein]-C-terminal S-[(2E,6E)-farnesyl]-L-cysteine methyl ester + S-adenosyl-L-homocysteine. Its activity is regulated as follows. Competitively inhibited by N-acetyl-S-trans,trans-farnesyl-l-cysteine (AFC). In terms of biological role, catalyzes the post-translational methylation of isoprenylated C-terminal cysteine residues. The polypeptide is Protein-S-isoprenylcysteine O-methyltransferase (ICMT) (Homo sapiens (Human)).